Reading from the N-terminus, the 146-residue chain is Small ribosomal subunit protein bS6 (146 aa).

Positions 100–146 are disordered; the sequence is QSAMMRKRDDDDRGDRPDRGDRGRGPRPDRPPRRPRDDAAASDEGGF. Residues 105-138 are compositionally biased toward basic and acidic residues; sequence RKRDDDDRGDRPDRGDRGRGPRPDRPPRRPRDDA.

Belongs to the bacterial ribosomal protein bS6 family.

Binds together with bS18 to 16S ribosomal RNA. The chain is Small ribosomal subunit protein bS6 from Methylocella silvestris (strain DSM 15510 / CIP 108128 / LMG 27833 / NCIMB 13906 / BL2).